We begin with the raw amino-acid sequence, 99 residues long: MPAVIDKALDFIGAMDVSAPTPSSMNESTAKGIFKYLKELGVPASAADITARADQEGWNPGFTEKMVGWAKKMETGERSVIKNPEYFSTYMQEELKALV.

This is an uncharacterized protein from Escherichia coli O157:H7.